The sequence spans 177 residues: Ribosome maturation factor RimM (177 aa).

Residues 98–177 (DDGYYWKDLM…TIEVDWDPGF (80 aa)) enclose the PRC barrel domain.

This sequence belongs to the RimM family. In terms of assembly, binds ribosomal protein uS19.

The protein localises to the cytoplasm. Its function is as follows. An accessory protein needed during the final step in the assembly of 30S ribosomal subunit, possibly for assembly of the head region. Essential for efficient processing of 16S rRNA. May be needed both before and after RbfA during the maturation of 16S rRNA. It has affinity for free ribosomal 30S subunits but not for 70S ribosomes. This is Ribosome maturation factor RimM from Enterobacter sp. (strain 638).